The primary structure comprises 40 residues: Alpha-conotoxin-like Qc1.4b (40 aa).

A propeptide spanning residues 1–19 is cleaved from the precursor; the sequence is SDGRNTAANDKASDLMALR. Intrachain disulfides connect Cys22-Cys28 and Cys23-Cys36. Positions 24–26 are lacks the Ser-Xaa-Pro motif that is crucial for potent interaction with nAChR; that stretch reads PNP. Cys36 carries the post-translational modification Cysteine amide. Positions 37–40 are excised as a propeptide; the sequence is GGGR.

The protein belongs to the conotoxin A superfamily. As to expression, expressed by the venom duct.

The protein localises to the secreted. Functionally, alpha-conotoxins act on postsynaptic membranes, they bind to the nicotinic acetylcholine receptors (nAChR) and thus inhibit them. Has possibly a distinct nAChR binding mode from other alpha-conotoxins, due to a different three residue motif (lacks the Ser-Xaa-Pro motif). The polypeptide is Alpha-conotoxin-like Qc1.4b (Conus quercinus (Oak cone)).